The following is a 1227-amino-acid chain: JNK-interacting protein 3 (1227 aa).

Residues 1–22 are disordered; sequence MMDNDDALLNNGGPQSGAETVY. Residues 25–113 enclose the RH1 domain; sequence EDNNMVMSEK…VTQYEREKSA (89 aa). Residues 84–191 are a coiled coil; it reads RINQEQDVEV…TELFKNHVDY (108 aa). The segment at 281–323 is disordered; that stretch reads DALQQQHHATSPQSPDSSPVVPNVPTNVGRSTTKKEQRSDNNL. A compositionally biased stretch (low complexity) spans 290–308; it reads TSPQSPDSSPVVPNVPTNV. Residues 363 to 489 adopt a coiled-coil conformation; that stretch reads GKEVENLIME…EAVRLTEILR (127 aa). The RH2 domain maps to 453-524; that stretch reads RKRFTRVEMA…PSNRPTERVA (72 aa). Disordered regions lie at residues 517–572, 804–851, and 863–889; these read NRPT…HPAS, GKVE…AEEP, and PLPGAPQRLSTDGNQTNNNNNSSSSSN. Over residues 526–540 the composition is skewed to gly residues; the sequence is GLGGGPMFRHTGGGS. Positions 541 to 550 are enriched in low complexity; that stretch reads PAHSHGSPSR. The span at 807–817 shows a compositional bias: basic and acidic residues; that stretch reads EFVRVKPKSDD. The stretch at 814–849 forms a coiled coil; that stretch reads KSDDEQNSNEKQQQEEEEAKEATEKSNEQLPAVSAE. The span at 879 to 889 shows a compositional bias: low complexity; sequence NNNNNSSSSSN.

It belongs to the JIP scaffold family. As to quaternary structure, forms homo- and heterooligomeric complexes. Binds the TPR motif-containing C-terminal of kinesin light chain, Klc. Pre-assembled syd scaffolding complexes are then transported as a cargo of kinesin, to the required subcellular location.

The protein resides in the cytoplasm. The JNK-interacting protein (JIP) group of scaffold proteins selectively mediates JNK-signaling by aggregating specific components of the MAPK cascade to form a functional JNK signaling module. May function as a regulator of vesicle transport, through interactions with the JNK-signaling components and motor proteins. Syd is required for efficient kinesin-I mediated axonal transport. The polypeptide is JNK-interacting protein 3 (syd) (Drosophila melanogaster (Fruit fly)).